We begin with the raw amino-acid sequence, 495 residues long: Beta-galactoside alpha-2,6-sialyltransferase 2 (495 aa).

Topologically, residues 1-10 (MKPHLKQWRQ) are cytoplasmic. The helical; Signal-anchor for type II membrane protein transmembrane segment at 11-31 (GMLCGVFAWGLFFVVIFLYFT) threads the bilayer. Residues 32-495 (DSSPAKPAPS…LQAVRCPPGA (464 aa)) lie on the Lumenal side of the membrane. 2 disordered regions span residues 63–90 (GASEGLPEGADLRRGSPRGLPSGPLRTW) and 107–165 (GRTS…EDGE). Residues 134–143 (PEGARPPRAA) are compositionally biased toward low complexity. Residues 144 to 153 (PGRRAKRGPR) are compositionally biased toward basic residues. 3 disulfide bridges follow: cysteine 225–cysteine 491, cysteine 268–cysteine 420, and cysteine 438–cysteine 449. N-linked (GlcNAc...) asparagine glycans are attached at residues asparagine 279 and asparagine 309.

This sequence belongs to the glycosyltransferase 29 family.

The protein localises to the golgi apparatus. It localises to the golgi stack membrane. The catalysed reaction is a beta-D-galactoside + CMP-N-acetyl-beta-neuraminate = an N-acetyl-alpha-neuraminyl-(2-&gt;6)-beta-D-galactosyl derivative + CMP + H(+). Its function is as follows. Transfers sialic acid from the donor of substrate CMP-sialic acid to galactose containing acceptor substrates. Has alpha-2,6-sialyltransferase activity toward oligosaccharides that have the Gal-beta-1,4-GlcNAc sequence at the non-reducing end of their carbohydrate groups, but it has weak or no activities toward glycoproteins and glycolipids. This is Beta-galactoside alpha-2,6-sialyltransferase 2 (ST6GAL2) from Bos taurus (Bovine).